Here is a 428-residue protein sequence, read N- to C-terminus: Histone deacetylase 3 (428 aa).

Residues 3–316 (KTVAYFYDPD…WTYETSLLVE (314 aa)) form a histone deacetylase region. Positions 17, 21, and 25 each coordinate 1D-myo-inositol 1,4,5,6-tetrakisphosphate. Histidine 135 is a catalytic residue. Zn(2+) is bound by residues aspartate 170, histidine 172, and aspartate 259. A 1D-myo-inositol 1,4,5,6-tetrakisphosphate-binding site is contributed by arginine 265. Basic and acidic residues-rich tracts occupy residues 388–405 (DRTD…ENYS) and 415–428 (DGDH…DVEI). Positions 388 to 428 (DRTDEADAEERGPEENYSRPEAPNEFYDGDHDNDKESDVEI) are disordered. Position 424 is a phosphoserine (serine 424).

It belongs to the histone deacetylase family. HD type 1 subfamily. Interacts with HDAC7 and HDAC9. Interacts with HDAC10, DAXX and DACH1. Found in a complex with NCOR1 and NCOR2. Component of the N-Cor repressor complex, at least composed of NCOR1, NCOR2, HDAC3, TBL1X, TBL1R, CORO2A and GPS2. Interacts with BCOR, MJD2A/JHDM3A, NRIP1, PRDM6 and SRY. Interacts with BTBD14B. Interacts with GLIS2. Interacts (via the DNA-binding domain) with NR2C1; the interaction recruits phosphorylated NR2C1 to PML bodies for sumoylation. Component of the Notch corepressor complex. Interacts with CBFA2T3 and NKAP. Interacts with APEX1; the interaction is not dependent on the acetylated status of APEX1. Interacts with and deacetylates MAPK14. Interacts with ZMYND15. Interacts with SMRT/NCOR2 and BCL6 on DNA enhancer elements. Interacts with INSM1. Interacts with XBP1; the interaction occurs in endothelial cell (EC) under disturbed flow. Interacts (via C-terminus) with CCAR2 (via N-terminus). Interacts with and deacetylates MEF2D. Interacts with BEND3. Interacts with NKAPL. Interacts with DHX36; this interaction occurs in a RNA-dependent manner. Interacts weakly with CRY1; this interaction is enhanced in the presence of FBXL3. Interacts with FBXL3 and BMAL1. Interacts with NCOR1. Interacts with RARA. Interacts with SETD5. Post-translationally, deubiquitinated on 'Lys-63'-linked ubiquitin chains by USP38; leading to a decreased level of histone acetylation. Sumoylated in vitro.

Its subcellular location is the nucleus. The protein resides in the chromosome. It localises to the cytoplasm. It is found in the cytosol. The enzyme catalyses N(6)-acetyl-L-lysyl-[histone] + H2O = L-lysyl-[histone] + acetate. The catalysed reaction is N(6)-acetyl-L-lysyl-[protein] + H2O = L-lysyl-[protein] + acetate. It catalyses the reaction N(6)-(2E)-butenoyl-L-lysyl-[protein] + H2O = (2E)-2-butenoate + L-lysyl-[protein]. It carries out the reaction N(6)-(2-hydroxyisobutanoyl)-L-lysyl-[protein] + H2O = 2-hydroxy-2-methylpropanoate + L-lysyl-[protein]. The enzyme catalyses N(6)-[(S)-lactoyl]-L-lysyl-[protein] + H2O = (S)-lactate + L-lysyl-[protein]. Inositol tetraphosphate (1D-myo-inositol 1,4,5,6-tetrakisphosphate) promotes the histone deacetylase activity by acting as an intermolecular glue between HDAC3 and NCOR2, thereby promoting its association with the N-Cor complex, a prerequisite for the histone deacetylase activity. Functionally, histone deacetylase that catalyzes the deacetylation of lysine residues on the N-terminal part of the core histones (H2A, H2B, H3 and H4), and some other non-histone substrates. Histone deacetylation gives a tag for epigenetic repression and plays an important role in transcriptional regulation, cell cycle progression and developmental events. Histone deacetylases act via the formation of large multiprotein complexes, such as N-Cor repressor complex, which activate the histone deacetylase activity. Participates in the BCL6 transcriptional repressor activity by deacetylating the H3 'Lys-27' (H3K27) on enhancer elements, antagonizing EP300 acetyltransferase activity and repressing proximal gene expression. Acts as a molecular chaperone for shuttling phosphorylated NR2C1 to PML bodies for sumoylation. Contributes, together with XBP1 isoform 1, to the activation of NFE2L2-mediated HMOX1 transcription factor gene expression in a PI(3)K/mTORC2/Akt-dependent signaling pathway leading to endothelial cell (EC) survival under disturbed flow/oxidative stress. Regulates both the transcriptional activation and repression phases of the circadian clock in a deacetylase activity-independent manner. During the activation phase, promotes the accumulation of ubiquitinated BMAL1 at the E-boxes and during the repression phase, blocks FBXL3-mediated CRY1/2 ubiquitination and promotes the interaction of CRY1 and BMAL1. The NCOR1-HDAC3 complex regulates the circadian expression of the core clock gene BMAL1 and the genes involved in lipid metabolism in the liver. Also functions as a deacetylase for non-histone targets, such as KAT5, MEF2D, MAPK14, RARA and STAT3. Serves as a corepressor of RARA, mediating its deacetylation and repression, leading to inhibition of RARE DNA element binding. In association with RARA, plays a role in the repression of microRNA-10a and thereby in the inflammatory response. In addition to protein deacetylase activity, also acts as a protein-lysine deacylase by recognizing other acyl groups: catalyzes removal of (2E)-butenoyl (crotonyl), lactoyl (lactyl) and 2-hydroxyisobutanoyl (2-hydroxyisobutyryl) acyl groups from lysine residues, leading to protein decrotonylation, delactylation and de-2-hydroxyisobutyrylation, respectively. Catalyzes decrotonylation of MAPRE1/EB1. Mediates delactylation NBN/NBS1, thereby inhibiting DNA double-strand breaks (DSBs) via homologous recombination (HR). This is Histone deacetylase 3 (HDAC3) from Pongo abelii (Sumatran orangutan).